The following is a 57-amino-acid chain: UPF0434 protein Shal_2504 (57 aa).

The protein belongs to the UPF0434 family.

This is UPF0434 protein Shal_2504 from Shewanella halifaxensis (strain HAW-EB4).